A 167-amino-acid polypeptide reads, in one-letter code: CS6 fimbrial subunit B (167 aa).

The N-terminal stretch at Met-1 to Ala-21 is a signal peptide.

Its subcellular location is the fimbrium. In Escherichia coli, this protein is CS6 fimbrial subunit B (cssB).